A 315-amino-acid polypeptide reads, in one-letter code: Taste receptor type 2 member 3 (315 aa).

The Extracellular segment spans residues 1 to 5; it reads MGLTE. A helical transmembrane segment spans residues 6-26; the sequence is GVFLILSGTQFTLGILVNCFI. The Cytoplasmic segment spans residues 27–41; the sequence is ELVNGSSWFKTKRMS. The helical transmembrane segment at 42–62 threads the bilayer; that stretch reads LSDFIITTLALLRIILLCIIL. Over 63–93 the chain is Extracellular; that stretch reads TDSFLIEFSPNTHDSGIIMQIIDVSWTFTNH. A helical transmembrane segment spans residues 94 to 114; that stretch reads LSIWLATCLGVLYCLKIASFS. The Cytoplasmic segment spans residues 115 to 127; sequence HPTFLWLKWRVSR. The helical transmembrane segment at 128–148 threads the bilayer; that stretch reads VMVWMLLGALLLSCGSTASLI. At 149 to 185 the chain is on the extracellular side; sequence NEFKLYSVFRGIEATRNVTEHFRKKRSEYYLIHVLGT. The N-linked (GlcNAc...) asparagine glycan is linked to N165. The chain crosses the membrane as a helical span at residues 186–206; the sequence is LWYLPPLIVSLASYSLLIFSL. The Cytoplasmic portion of the chain corresponds to 207–233; it reads GRHTRQMLQNGTSSRDPTTEAHKRAIR. The helical transmembrane segment at 234-254 threads the bilayer; the sequence is IILSFFFLFLLYFLAFLIASF. The Extracellular portion of the chain corresponds to 255-265; sequence GNFLPKTKMAK. Residues 266–286 form a helical membrane-spanning segment; sequence MIGEVMTMFYPAGHSFILILG. Over 287–315 the chain is Cytoplasmic; that stretch reads NSKLKQTFVVMLRCESGHLKPGSKGPIFS.

It belongs to the G-protein coupled receptor T2R family.

The protein localises to the membrane. Functionally, gustducin-coupled receptor implicated in the perception of bitter compounds in the oral cavity and the gastrointestinal tract. Signals through PLCB2 and the calcium-regulated cation channel TRPM5. The protein is Taste receptor type 2 member 3 (TAS2R3) of Gorilla gorilla gorilla (Western lowland gorilla).